A 308-amino-acid polypeptide reads, in one-letter code: Cell division protein FtsX (308 aa).

The Cytoplasmic segment spans residues 1-24 (MISRFFRHLFEALKSLKRNGWMTV). The chain crosses the membrane as a helical span at residues 25-45 (AAVSSVMITLTLVAIFASVIF). At 46–178 (NTAKLATDIE…NTERLFKLAS (133 aa)) the chain is on the extracellular side. Residues 179 to 199 (FIRVWGLGIAALLIFIAVFLI) form a helical membrane-spanning segment. Residues 200–236 (SNTIRITIISRSREIQIMRLVGAKNSYIRGPFLLEGA) lie on the Cytoplasmic side of the membrane. A helical transmembrane segment spans residues 237 to 257 (FIGLLGAIAPSVLVFIVYQIV). Residues 258 to 276 (YQSVNKSLVGQNLSMISPD) lie on the Extracellular side of the membrane. The chain crosses the membrane as a helical span at residues 277-297 (LFSPLMIALLFVIGVFIGSLG). The Cytoplasmic segment spans residues 298 to 308 (SGISMRRFLKI).

This sequence belongs to the ABC-4 integral membrane protein family. FtsX subfamily. As to quaternary structure, homodimer. Interacts with FtsE; forms a membrane-associated complex. Interacts (via large extracellular loop) with PcsB (via N-terminal coiled-coil domain). This interaction directs PcsB to equatorial and septal sites of dividing cells.

The protein resides in the cell membrane. Part of the ABC transporter FtsEX involved in asymmetric cellular division facilitating the initiation of sporulation. Required in maintaining normal growth and cellular morphology. The polypeptide is Cell division protein FtsX (Streptococcus pneumoniae serotype 2 (strain D39 / NCTC 7466)).